The sequence spans 301 residues: MARTDGDTWDLASSVGATATSVAASRAFASRGPDALIDDPYARLLVEAVGLPHFVKVARGEIDFDGDPLFGAQQAINQIVVRTRIFDDFLTDAGQREPQIRQAVILASGLDTRAYRLDWPAGTVVYEIDQPEVIDFKTAVLTDAGVAPAADRRTVGIDLREDWPTALRDAGFDPDRPTAWIAEGLLPYLPPDAQDRLLDSITALSAPGSRLATEHMDAKALTGDWAKAMTERARRHGSDIDLTKLFYNGERRSATEHLGAVGWQTSVQTSNDAYIANGFGPIRDDLLAMIGDSGYLTAWRP.

S-adenosyl-L-methionine contacts are provided by residues aspartate 129 and 158–159 (DL).

The protein belongs to the UPF0677 family.

Functionally, exhibits S-adenosyl-L-methionine-dependent methyltransferase activity. The chain is Putative S-adenosyl-L-methionine-dependent methyltransferase Mflv_5024 from Mycolicibacterium gilvum (strain PYR-GCK) (Mycobacterium gilvum (strain PYR-GCK)).